An 83-amino-acid polypeptide reads, in one-letter code: NAD(P)H-quinone oxidoreductase subunit L (83 aa).

The next 2 helical transmembrane spans lie at 15-35 and 53-73; these read LLVL…VPLA and LGIY…APFL.

This sequence belongs to the complex I NdhL subunit family. In terms of assembly, NDH-1 can be composed of about 15 different subunits; different subcomplexes with different compositions have been identified which probably have different functions.

It localises to the cellular thylakoid membrane. The catalysed reaction is a plastoquinone + NADH + (n+1) H(+)(in) = a plastoquinol + NAD(+) + n H(+)(out). It catalyses the reaction a plastoquinone + NADPH + (n+1) H(+)(in) = a plastoquinol + NADP(+) + n H(+)(out). In terms of biological role, NDH-1 shuttles electrons from an unknown electron donor, via FMN and iron-sulfur (Fe-S) centers, to quinones in the respiratory and/or the photosynthetic chain. The immediate electron acceptor for the enzyme in this species is believed to be plastoquinone. Couples the redox reaction to proton translocation, and thus conserves the redox energy in a proton gradient. Cyanobacterial NDH-1 also plays a role in inorganic carbon-concentration. The sequence is that of NAD(P)H-quinone oxidoreductase subunit L from Synechococcus sp. (strain CC9605).